Here is a 440-residue protein sequence, read N- to C-terminus: UDP-N-acetylmuramoylalanine--D-glutamate ligase (440 aa).

ATP is bound at residue 112-118 (GSNGKST).

Belongs to the MurCDEF family.

The protein localises to the cytoplasm. The enzyme catalyses UDP-N-acetyl-alpha-D-muramoyl-L-alanine + D-glutamate + ATP = UDP-N-acetyl-alpha-D-muramoyl-L-alanyl-D-glutamate + ADP + phosphate + H(+). It participates in cell wall biogenesis; peptidoglycan biosynthesis. Its function is as follows. Cell wall formation. Catalyzes the addition of glutamate to the nucleotide precursor UDP-N-acetylmuramoyl-L-alanine (UMA). This is UDP-N-acetylmuramoylalanine--D-glutamate ligase from Blochmanniella pennsylvanica (strain BPEN).